The primary structure comprises 389 residues: Probable tRNA pseudouridine synthase D 1 (389 aa).

Aspartate 63 (nucleophile) is an active-site residue. In terms of domain architecture, TRUD spans glycine 135–isoleucine 345.

The protein belongs to the pseudouridine synthase TruD family.

The enzyme catalyses uridine(13) in tRNA = pseudouridine(13) in tRNA. Could be responsible for synthesis of pseudouridine from uracil-13 in transfer RNAs. This chain is Probable tRNA pseudouridine synthase D 1 (truD1), found in Methanococcus maripaludis (strain DSM 14266 / JCM 13030 / NBRC 101832 / S2 / LL).